The primary structure comprises 47 residues: uncharacterized protein (47 aa).

Residues 28–45 (VMIWGCLPYFLYVLIRMF) form a helical membrane-spanning segment.

The protein resides in the cell membrane. This is an uncharacterized protein from Bacillus subtilis (strain 168).